A 157-amino-acid polypeptide reads, in one-letter code: 6,7-dimethyl-8-ribityllumazine synthase (157 aa).

5-amino-6-(D-ribitylamino)uracil-binding positions include phenylalanine 22, 56–58 (AFE), and 81–83 (VLI). 86-87 (ET) is a (2S)-2-hydroxy-3-oxobutyl phosphate binding site. Histidine 89 serves as the catalytic Proton donor. Phenylalanine 114 is a 5-amino-6-(D-ribitylamino)uracil binding site. Arginine 128 contacts (2S)-2-hydroxy-3-oxobutyl phosphate.

This sequence belongs to the DMRL synthase family.

The catalysed reaction is (2S)-2-hydroxy-3-oxobutyl phosphate + 5-amino-6-(D-ribitylamino)uracil = 6,7-dimethyl-8-(1-D-ribityl)lumazine + phosphate + 2 H2O + H(+). Its pathway is cofactor biosynthesis; riboflavin biosynthesis; riboflavin from 2-hydroxy-3-oxobutyl phosphate and 5-amino-6-(D-ribitylamino)uracil: step 1/2. Its function is as follows. Catalyzes the formation of 6,7-dimethyl-8-ribityllumazine by condensation of 5-amino-6-(D-ribitylamino)uracil with 3,4-dihydroxy-2-butanone 4-phosphate. This is the penultimate step in the biosynthesis of riboflavin. This Chlamydia trachomatis serovar L2 (strain ATCC VR-902B / DSM 19102 / 434/Bu) protein is 6,7-dimethyl-8-ribityllumazine synthase.